A 405-amino-acid chain; its full sequence is LanC-like protein GCL2 (405 aa).

3 residues coordinate Zn(2+): C278, C323, and H324.

The protein belongs to the LanC-like protein family.

In terms of biological role, may play a role in signaling. May be not involved in abscisic acid (ABA) signaling. This chain is LanC-like protein GCL2 (GCL2), found in Arabidopsis thaliana (Mouse-ear cress).